A 115-amino-acid chain; its full sequence is Rapid alkalinization factor (115 aa).

Residues 1–23 form the signal peptide; that stretch reads MGVPSGLILCVLIGAFFISMAAA. A propeptide spans 24–66 (removed in mature form); it reads GDSGAYDWVMPARSGGGCKGSIGECIAEEEEFELDSESNRRIL. Intrachain disulfides connect cysteine 84/cysteine 94 and cysteine 107/cysteine 113.

Post-translationally, proteolytically cleaved, probably by S1P, a subtilisin-like serine protease (subtilase).

It localises to the secreted. Functionally, cell signaling peptide that may regulate plant stress, growth, and development. Mediates a rapid alkalinization of extracellular space by mediating a transient increase in the cytoplasmic Ca(2+) concentration leading to a calcium-dependent signaling events through a cell surface receptor and a concomitant activation of some intracellular mitogen-activated protein kinases. Prevents root growth and seedling development in heterologous system. This chain is Rapid alkalinization factor (RALF), found in Nicotiana tabacum (Common tobacco).